The following is a 391-amino-acid chain: 8-amino-7-oxononanoate synthase (391 aa).

108–109 (GF) serves as a coordination point for pyridoxal 5'-phosphate. His-133 is a substrate binding site. Pyridoxal 5'-phosphate-binding residues include Ser-180, His-208, and Thr-236. An N6-(pyridoxal phosphate)lysine modification is found at Lys-239. Substrate is bound at residue Thr-353.

It belongs to the class-II pyridoxal-phosphate-dependent aminotransferase family. BioF subfamily. In terms of assembly, homodimer. Pyridoxal 5'-phosphate serves as cofactor.

The enzyme catalyses 6-carboxyhexanoyl-[ACP] + L-alanine + H(+) = (8S)-8-amino-7-oxononanoate + holo-[ACP] + CO2. It participates in cofactor biosynthesis; biotin biosynthesis. Its function is as follows. Catalyzes the decarboxylative condensation of pimeloyl-[acyl-carrier protein] and L-alanine to produce 8-amino-7-oxononanoate (AON), [acyl-carrier protein], and carbon dioxide. This chain is 8-amino-7-oxononanoate synthase, found in Thermosipho melanesiensis (strain DSM 12029 / CIP 104789 / BI429).